We begin with the raw amino-acid sequence, 594 residues long: Arginine--tRNA ligase (594 aa).

Positions Ala139–His149 match the 'HIGH' region motif.

It belongs to the class-I aminoacyl-tRNA synthetase family. As to quaternary structure, monomer.

It localises to the cytoplasm. It catalyses the reaction tRNA(Arg) + L-arginine + ATP = L-arginyl-tRNA(Arg) + AMP + diphosphate. This is Arginine--tRNA ligase from Burkholderia pseudomallei (strain 1106a).